We begin with the raw amino-acid sequence, 101 residues long: Hg-scorpine-like-2 (101 aa).

The signal sequence occupies residues 1–17 (MKLTILILLVITSFCSC). The BetaSPN-type CS-alpha/beta domain maps to 60-100 (QQLCMFNKDVAGWCEKSCQQSAHQKGYCHGTKCKCGIPLNY). 3 disulfide bridges follow: Cys63-Cys87, Cys73-Cys92, and Cys77-Cys94.

It belongs to the long chain scorpion toxin family. Class 3 subfamily. Expressed by the venom gland.

It is found in the secreted. Its function is as follows. Inhibits voltage-gated potassium channels. The protein is Hg-scorpine-like-2 of Hoffmannihadrurus gertschi (Scorpion).